The sequence spans 333 residues: HTH-type transcriptional repressor PurR (333 aa).

The HTH lacI-type domain occupies 2–56 (ATIKDVAKLASVSTTTVSHVINKTRFVAEATQKRVWEAVEELNYAPSAVARSLKC). Residues 4 to 23 (IKDVAKLASVSTTTVSHVIN) constitute a DNA-binding region (H-T-H motif). Residues 48–56 (SAVARSLKC) mediate DNA binding. Residues phenylalanine 73, lysine 189, threonine 191, phenylalanine 220, and aspartate 274 each coordinate hypoxanthine.

In terms of assembly, homodimer.

Its pathway is purine metabolism; purine nucleotide biosynthesis [regulation]. Its function is as follows. Is the main repressor of the genes involved in the de novo synthesis of purine nucleotides, regulating purB, purC, purEK, purF, purHD, purL, purMN and guaBA expression. PurR is allosterically activated to bind its cognate DNA by binding the purine corepressors, hypoxanthine or guanine, thereby effecting transcription repression. This is HTH-type transcriptional repressor PurR from Aliivibrio salmonicida (strain LFI1238) (Vibrio salmonicida (strain LFI1238)).